A 393-amino-acid chain; its full sequence is Cobalt-precorrin-5B C(1)-methyltransferase (393 aa).

Residues 1–35 (MSDETRVGEAAEQAATPEKIRKGSARRERGNRTGF) are disordered. Positions 18 to 31 (EKIRKGSARRERGN) are enriched in basic and acidic residues.

Belongs to the CbiD family.

It catalyses the reaction Co-precorrin-5B + S-adenosyl-L-methionine = Co-precorrin-6A + S-adenosyl-L-homocysteine. The protein operates within cofactor biosynthesis; adenosylcobalamin biosynthesis; cob(II)yrinate a,c-diamide from sirohydrochlorin (anaerobic route): step 6/10. Its function is as follows. Catalyzes the methylation of C-1 in cobalt-precorrin-5B to form cobalt-precorrin-6A. This chain is Cobalt-precorrin-5B C(1)-methyltransferase, found in Dechloromonas aromatica (strain RCB).